A 334-amino-acid polypeptide reads, in one-letter code: L-lactate dehydrogenase B chain (334 aa).

NAD(+) is bound at residue G30–K58. Residues R107, N139, and R170 each coordinate substrate. An NAD(+)-binding site is contributed by N139. The Proton acceptor role is filled by H194. T249 lines the substrate pocket.

Belongs to the LDH/MDH superfamily. LDH family. In terms of assembly, homotetramer.

It is found in the cytoplasm. The catalysed reaction is (S)-lactate + NAD(+) = pyruvate + NADH + H(+). It participates in fermentation; pyruvate fermentation to lactate; (S)-lactate from pyruvate: step 1/1. In terms of biological role, interconverts simultaneously and stereospecifically pyruvate and lactate with concomitant interconversion of NADH and NAD(+). The sequence is that of L-lactate dehydrogenase B chain (ldhb) from Xenopus laevis (African clawed frog).